The following is a 373-amino-acid chain: Chaperone protein DnaJ (373 aa).

One can recognise a J domain in the interval Asp5–Gly70. The CR-type zinc finger occupies Gly133–His211. Zn(2+) is bound by residues Cys146, Cys149, Cys163, Cys166, Cys185, Cys188, Cys199, and Cys202. 4 CXXCXGXG motif repeats span residues Cys146–Gly153, Cys163–Gly170, Cys185–Gly192, and Cys199–Gly206. The tract at residues Leu346–Gln373 is disordered. Residues Ser354–Gln373 show a composition bias toward basic and acidic residues.

This sequence belongs to the DnaJ family. As to quaternary structure, homodimer. Zn(2+) is required as a cofactor.

Its subcellular location is the cytoplasm. Functionally, participates actively in the response to hyperosmotic and heat shock by preventing the aggregation of stress-denatured proteins and by disaggregating proteins, also in an autonomous, DnaK-independent fashion. Unfolded proteins bind initially to DnaJ; upon interaction with the DnaJ-bound protein, DnaK hydrolyzes its bound ATP, resulting in the formation of a stable complex. GrpE releases ADP from DnaK; ATP binding to DnaK triggers the release of the substrate protein, thus completing the reaction cycle. Several rounds of ATP-dependent interactions between DnaJ, DnaK and GrpE are required for fully efficient folding. Also involved, together with DnaK and GrpE, in the DNA replication of plasmids through activation of initiation proteins. This is Chaperone protein DnaJ from Methylobacillus flagellatus (strain ATCC 51484 / DSM 6875 / VKM B-1610 / KT).